The sequence spans 336 residues: tRNA N6-adenosine threonylcarbamoyltransferase (336 aa).

Residues histidine 115 and histidine 119 each contribute to the Fe cation site. Substrate is bound by residues 137–141, aspartate 170, glycine 183, aspartate 187, and asparagine 276; that span reads LVSGG. Aspartate 302 lines the Fe cation pocket.

Belongs to the KAE1 / TsaD family. Requires Fe(2+) as cofactor.

The protein localises to the cytoplasm. It catalyses the reaction L-threonylcarbamoyladenylate + adenosine(37) in tRNA = N(6)-L-threonylcarbamoyladenosine(37) in tRNA + AMP + H(+). Its function is as follows. Required for the formation of a threonylcarbamoyl group on adenosine at position 37 (t(6)A37) in tRNAs that read codons beginning with adenine. Is involved in the transfer of the threonylcarbamoyl moiety of threonylcarbamoyl-AMP (TC-AMP) to the N6 group of A37, together with TsaE and TsaB. TsaD likely plays a direct catalytic role in this reaction. This is tRNA N6-adenosine threonylcarbamoyltransferase from Streptococcus suis (strain 98HAH33).